Here is a 640-residue protein sequence, read N- to C-terminus: Epithelial sodium channel subunit beta (640 aa).

The Cytoplasmic portion of the chain corresponds to 1-50 (MHVKKYLLKGLHRLQKGPGYTYKELLVWYCDNTNTHGPKRIICEGPKKKA). A helical membrane pass occupies residues 51–71 (MWFLLTLLFAALVCWQWGIFI). The Extracellular segment spans residues 72–532 (RTYLSWEVSV…GGQFGFWMGG (461 aa)). 9 disulfide bridges follow: C98/C272, C184/C189, C196/C203, C249/C256, C361/C448, C386/C444, C390/C440, C399/C426, and C401/C415. A glycan (N-linked (GlcNAc...) asparagine) is linked at N260. Residues 533–553 (SVLCLIEFGEIIIDFVWITII) traverse the membrane as a helical segment. The Cytoplasmic segment spans residues 554–640 (KLVALAKSLR…IESDSEGDAI (87 aa)). Positions 590–640 (FQPDTAPRSPNTGPYPSEQALPIPGTPPPNYDSLRLQPLDVIESDSEGDAI) are disordered. Residues 616-620 (PPPNY) carry the PY motif; recruits WW domain-containing proteins and is thereby required for ubiquitination and inhibition of the channel by NEDD4 and NEDD4L motif. The span at 631–640 (IESDSEGDAI) shows a compositional bias: acidic residues. Phosphoserine occurs at positions 633 and 635.

The protein belongs to the amiloride-sensitive sodium channel (TC 1.A.6) family. SCNN1B subfamily. In terms of assembly, component of the heterotrimeric epithelial sodium channel (ENaC) composed of an alpha/SCNN1A, a beta/SCNN1B and a gamma/SCNN1G subunit. An additional delta/SCNN1D subunit can replace the alpha/SCNN1A subunit to form an alternative channel with specific properties. Interacts with WWP1 (via WW domains). Interacts with WWP2 (via WW domains); inhibits the channel. Interacts with the full-length immature form of PCSK9 (pro-PCSK9); inhibits ENaC by promoting its proteasomal degradation. Interacts (N-glycosylated) with BPIFA1; the interaction is direct and inhibits the proteolytic processing of SCNN1A and SCNN1G and the activation of ENaC. In terms of processing, ubiquitinated. Can be ubiquitinated at multiple sites and undergo monoubiquitination and polyubiquitination. Ubiquitination by NEDD4 or NEDD4L inhibits the ENaC channel through endocytosis, intracellular retention and degradation of its individual subunits. However, some studies could not confirm the ubiquitination of this subunit of the ENaC. Phosphorylated on serine and threonine residues. Aldosterone and insulin increase the basal level of phosphorylation. Post-translationally, N-glycosylated. N-glycosylation is required for interaction with BPIFA1. As to expression, detected in placenta, lung and kidney. Expressed in kidney (at protein level).

The protein resides in the apical cell membrane. It localises to the cytoplasmic vesicle membrane. The catalysed reaction is Na(+)(in) = Na(+)(out). Originally identified and characterized by its inhibition by the diuretic drug amiloride. Functionally, this is one of the three pore-forming subunits of the heterotrimeric epithelial sodium channel (ENaC), a critical regulator of sodium balance and fluid homeostasis. ENaC operates in epithelial tissues, where it mediates the electrodiffusion of sodium ions from extracellular fluid through the apical membrane of cells, with water following osmotically. It plays a key role in maintaining sodium homeostasis through electrogenic sodium reabsorption in the kidneys. Additionally, ENaC is essential for airway surface liquid homeostasis, which is crucial for proper mucus clearance. This is Epithelial sodium channel subunit beta from Homo sapiens (Human).